Here is a 431-residue protein sequence, read N- to C-terminus: Glucose-1-phosphate adenylyltransferase (431 aa).

Lys39 is a binding site for beta-D-fructose 1,6-bisphosphate. Arg40, His46, and Arg52 together coordinate AMP. Tyr114 is an alpha-D-glucose 1-phosphate binding site. Residue Arg130 participates in AMP binding. Alpha-D-glucose 1-phosphate-binding positions include Gly179, 194-195, and Ser212; that span reads EK. Residues Glu370 and Arg386 each coordinate AMP. Beta-D-fructose 1,6-bisphosphate contacts are provided by residues 419 to 423 and 429 to 431; these read REMLR and QER.

It belongs to the bacterial/plant glucose-1-phosphate adenylyltransferase family. In terms of assembly, homotetramer.

The enzyme catalyses alpha-D-glucose 1-phosphate + ATP + H(+) = ADP-alpha-D-glucose + diphosphate. It functions in the pathway glycan biosynthesis; glycogen biosynthesis. Allosterically activated by fructose-1,6-bisphosphate (F16BP) and inhibited by AMP. Functionally, involved in the biosynthesis of ADP-glucose, a building block required for the elongation reactions to produce glycogen. Catalyzes the reaction between ATP and alpha-D-glucose 1-phosphate (G1P) to produce pyrophosphate and ADP-Glc. The polypeptide is Glucose-1-phosphate adenylyltransferase (Escherichia coli O7:K1 (strain IAI39 / ExPEC)).